The primary structure comprises 400 residues: MDEDGGGEGGGVPEDLSLEEREELLDIRRRKKELIDDIERLKYEIAEVMTEIDNLTSVEESKTTQRNKQIAMGRKKFNMDPKKGIQFLIENDLLQSSPEDVAQFLYKGEGLNKTVIGDYLGERDEFNIKVLQAFVELHEFADLNLVQALRQFLWSFRLPGEAQKIDRMMEAFASRYCLCNPGVFQSTDTCYVLSFAIIMLNTSLHNHNVRDKPTAERFIAMNRGINEGGDLPEELLRNLYESIKNEPFKIPEDDGNDLTHTFFNPDREGWLLKLGGGRVKTWKRRWFILTDNCLYYFEYTTDKEPRGIIPLENLSIREVEDPRKPNCFELYNPSHKGQVIKACKTEADGRVVEGNHVVYRISAPSPEEKEEWMKSIKASISRDPFYDMLATRKRRIANKK.

A coiled-coil region spans residues 14–61 (EDLSLEEREELLDIRRRKKELIDDIERLKYEIAEVMTEIDNLTSVEES). Positions 77 to 206 (FNMDPKKGIQ…IIMLNTSLHN (130 aa)) constitute an SEC7 domain. The PH domain maps to 264 to 381 (NPDREGWLLK…WMKSIKASIS (118 aa)). Residues 273–281 (KLGGGRVKT), Arg-285, Tyr-296, Arg-306, and Asn-355 contribute to the a 1,2-diacyl-sn-glycero-3-phospho-(1D-myo-inositol-3,4,5-trisphosphate) site. Positions 392 to 400 (RKRRIANKK) are C-terminal autoinhibitory region.

As to quaternary structure, interacts with TAMALIN. Interacts with ARF6. Interacts with FRMD4A. Interacts with FRMD4B. As to expression, almost absent from liver, thymus and peripheral blood lymphocytes.

It localises to the cytoplasm. It is found in the cytosol. Its subcellular location is the cell membrane. The protein localises to the cell junction. The protein resides in the adherens junction. It localises to the tight junction. In terms of biological role, promotes guanine-nucleotide exchange on ARF1 and ARF6. Promotes the activation of ARF factors through replacement of GDP with GTP. Plays a role in the epithelial polarization. This chain is Cytohesin-3, found in Homo sapiens (Human).